The primary structure comprises 331 residues: 5-dehydro-2-deoxygluconokinase (331 aa).

The protein belongs to the carbohydrate kinase PfkB family.

The enzyme catalyses 5-dehydro-2-deoxy-D-gluconate + ATP = 6-phospho-5-dehydro-2-deoxy-D-gluconate + ADP + H(+). The protein operates within polyol metabolism; myo-inositol degradation into acetyl-CoA; acetyl-CoA from myo-inositol: step 5/7. Functionally, catalyzes the phosphorylation of 5-dehydro-2-deoxy-D-gluconate (2-deoxy-5-keto-D-gluconate or DKG) to 6-phospho-5-dehydro-2-deoxy-D-gluconate (DKGP). The chain is 5-dehydro-2-deoxygluconokinase from Halalkalibacterium halodurans (strain ATCC BAA-125 / DSM 18197 / FERM 7344 / JCM 9153 / C-125) (Bacillus halodurans).